Reading from the N-terminus, the 402-residue chain is Oligopeptide transport ATP-binding protein OppD (402 aa).

The 288-residue stretch at 22–309 folds into the ABC transporter domain; the sequence is LDITDLHVNF…PLHPYTWALI (288 aa). Position 58-65 (58-65) interacts with ATP; sequence GESGSGKS.

This sequence belongs to the ABC transporter superfamily. As to quaternary structure, the complex is composed of two ATP-binding proteins (OppD and OppF), two transmembrane proteins (OppB and OppC) and a solute-binding protein (OppA).

It localises to the cell membrane. The catalysed reaction is a [peptide](out) + ATP + H2O = a [peptide](in) + ADP + phosphate + H(+). Functionally, part of the ABC transporter complex OppABCDF involved in the uptake of oligopeptides. Probably responsible for energy coupling to the transport system. The chain is Oligopeptide transport ATP-binding protein OppD (oppD) from Mycoplasma genitalium (strain ATCC 33530 / DSM 19775 / NCTC 10195 / G37) (Mycoplasmoides genitalium).